Reading from the N-terminus, the 240-residue chain is Ubiquinone biosynthesis O-methyltransferase (240 aa).

S-adenosyl-L-methionine contacts are provided by arginine 44, glycine 64, aspartate 85, and methionine 129.

Belongs to the methyltransferase superfamily. UbiG/COQ3 family.

The catalysed reaction is a 3-demethylubiquinol + S-adenosyl-L-methionine = a ubiquinol + S-adenosyl-L-homocysteine + H(+). The enzyme catalyses a 3-(all-trans-polyprenyl)benzene-1,2-diol + S-adenosyl-L-methionine = a 2-methoxy-6-(all-trans-polyprenyl)phenol + S-adenosyl-L-homocysteine + H(+). The protein operates within cofactor biosynthesis; ubiquinone biosynthesis. Functionally, O-methyltransferase that catalyzes the 2 O-methylation steps in the ubiquinone biosynthetic pathway. In Escherichia coli (strain K12 / MC4100 / BW2952), this protein is Ubiquinone biosynthesis O-methyltransferase.